The following is an 86-amino-acid chain: UPF0147 protein PYRAB16980 (86 aa).

This sequence belongs to the UPF0147 family.

The chain is UPF0147 protein PYRAB16980 from Pyrococcus abyssi (strain GE5 / Orsay).